Consider the following 1561-residue polypeptide: MDNHSSSSNPSSLSSSSSSSSSSSSFLSDHVKKEEQNGLDTIKEEIENKIENEEEEEKIEEKPIEKVEEEKIIVQKEEEEKIEEEPIEKEEEKKVEEEKFEQDNINTTVEAKTLETSTEPIATEVVDEKSITSNNENLEEQQKEDVISIPPPQQEQQEQQEQQEKQKEETKPSIREEVKEKIKGKLSEIKEEIKDIKEEIKHVIREEVTEPIIVVENNNSPPPPPPPPSITVQSSSPVSSQISSPVSSPVSSPKPSVTFNEDGRKRKEGGITASISSEDIMALSSSTSTNNKGIPKENKRTASTILRSKSSPNPGANNPNHNKDGNNSSSSSSSNNNSDNNNNSDNNSNNNNINNNNSSSNNLNYDSSDIDTEAIPKFYHDFKIHRGTSSCVYCGENTRLWSTSYKCFFCGVVCHKKCLDSMNTIPCSSAIHNIKGKNRSQTISGYAPPNSLALQAPPYISVAKPSSITNSSSKSTPSLLSAPPSQSNSNNSSPNISSKSNPNSPITTSATTTTTTATISSLSPTSISSPPIASEQPPSPLLQQQQQQQQQQQQQQQQQQQQQQQQQQISTTQLQDLNNTSEKPDDDMINLMFDTLMVDLDLNLPASKLSTTQKWLLLEQKFKLKKDELLPEYFINALKEQPSKSIFQSLVVILRTNVTKNWMCSFVQLNGVEILFEILSKSKRKDYKDDCLSCIGKVMSNPIGLNSVAQLPMAPKTITKVLRSKQYCIKSKAMAIELLTVMLLDKYVPGGCSLVLKALTKTKEKKRFSFFVRFIKDNESLELKTKALCFINVLIFEMEDMNVRVNIRSEFLRLGLYTYLREIKKTITHEKTLFTQIEIFEEMMNEDTQELDLRLEDLKRQLGIDIDDVDQVFKALKNTTSKSGLNRQLLNILQNLLVIKACDPTDGVKYFILCDTLVKQISLHKGGFEDPSNFDFRGLMVGLESATAEVTLNRKLGELEKQNIDKAMKIQEQDINIKSLLDLLKQLKDGGTAPDASMIKKIEEMIKQMEPPPPPISVKSPDDPNNAAPIVVAPIPPPPPPISGAPPPPPPPPPPMKGGAGPPPPPPPPGKLGAKKPPAGVQCRPPPKVPKPSHPLKAYQWVKLAPVKVNDSLFDKLGPMNDINLPWNQIEEEFAAKVIVREKKAIVKPKGPTQVIDPKLGQNISIFLSQFKGVEPKQLITYIQSMDESKMSRDQVKQISKLLPSREDLAALKEFLQAEDRSKLSIADQYCIDIGAFPFASEKISMFLLKSELKSRLDEVKPQIAAVSVACDEVYKSKKLIRIIEIILVLGNFINYGTPRGDISGYKLDSLIKLSDTKSSDLSSNLINTFVKYCQEKEPNLLTFADELPSLTTARKTIWSGVVADVSSIGRDVHSVKQIVETLQKSNEPFNQSIIDFLATASTEVEKLRKLLESTQENFKKLCKYFAEEEGKSQPEEFFDIFGRFITLFENATTQLQQQKEEQLKEEKRLQQKQQRQERAVRKLTTSNESASASPNHAKSTDDKSDEDDDIVNDLLMAVRDGDAFRQAKGRRRTTHQIATSKMISNNLDPSKILPTSPNKN.

Residues 1-28 (MDNHSSSSNPSSLSSSSSSSSSSSSFLS) are compositionally biased toward low complexity. Disordered stretches follow at residues 1–63 (MDNH…EEKP), 77–187 (EEEE…GKLS), 211–279 (PIIV…SSED), and 305–365 (ILRS…NLNY). Residues 29-51 (DHVKKEEQNGLDTIKEEIENKIE) are compositionally biased toward basic and acidic residues. Positions 32-85 (KKEEQNGLDTIKEEIENKIENEEEEEKIEEKPIEKVEEEKIIVQKEEEEKIEEE) form a coiled coil. A compositionally biased stretch (acidic residues) spans 80–89 (EKIEEEPIEK). Polar residues predominate over residues 103–120 (DNINTTVEAKTLETSTEP). Residues 158 to 208 (EQQEQQEKQKEETKPSIREEVKEKIKGKLSEIKEEIKDIKEEIKHVIREEV) adopt a coiled-coil conformation. The span at 162–187 (QQEKQKEETKPSIREEVKEKIKGKLS) shows a compositional bias: basic and acidic residues. Pro residues predominate over residues 220-229 (SPPPPPPPPS). Over residues 230–258 (ITVQSSSPVSSQISSPVSSPVSSPKPSVT) the composition is skewed to low complexity. Polar residues predominate over residues 305-320 (ILRSKSSPNPGANNPN). The span at 326 to 365 (NNSSSSSSSNNNSDNNNNSDNNSNNNNINNNNSSSNNLNY) shows a compositional bias: low complexity. The Phorbol-ester/DAG-type zinc-finger motif lies at 379 to 427 (YHDFKIHRGTSSCVYCGENTRLWSTSYKCFFCGVVCHKKCLDSMNTIPC). Residues 465–534 (PSSITNSSSK…TSISSPPIAS (70 aa)) are compositionally biased toward low complexity. The segment at 465–549 (PSSITNSSSK…PLLQQQQQQQ (85 aa)) is disordered. The stretch at 541 to 573 (LLQQQQQQQQQQQQQQQQQQQQQQQQQQISTTQ) forms a coiled coil. Positions 581-929 (SEKPDDDMIN…QISLHKGGFE (349 aa)) constitute a GBD/FH3 domain. Positions 952–989 (LNRKLGELEKQNIDKAMKIQEQDINIKSLLDLLKQLKD) form a coiled coil. Disordered stretches follow at residues 1009–1092 (MEPP…VPKP), 1466–1508 (EEKR…SDED), and 1526–1561 (RQAKGRRRTTHQIATSKMISNNLDPSKILPTSPNKN). Over residues 1017 to 1033 (SVKSPDDPNNAAPIVVA) the composition is skewed to low complexity. In terms of domain architecture, FH1 spans 1019–1081 (KSPDDPNNAA…LGAKKPPAGV (63 aa)). Residues 1034 to 1070 (PIPPPPPPISGAPPPPPPPPPPMKGGAGPPPPPPPPG) are compositionally biased toward pro residues. Residues 1071–1081 (KLGAKKPPAGV) are compositionally biased toward low complexity. One can recognise an FH2 domain in the interval 1086 to 1475 (PPKVPKPSHP…EEKRLQQKQQ (390 aa)). Residues 1398 to 1491 (LATASTEVEK…RKLTTSNESA (94 aa)) are a coiled coil. A compositionally biased stretch (basic and acidic residues) spans 1466-1481 (EEKRLQQKQQRQERAV). Polar residues-rich tracts occupy residues 1484–1498 (LTTSNESASASPNHA) and 1536–1561 (HQIATSKMISNNLDPSKILPTSPNKN). Positions 1488–1518 (NESASASPNHAKSTDDKSDEDDDIVNDLLMA) constitute a DAD domain.

It belongs to the formin homology family. Diaphanous subfamily. As to quaternary structure, interacts (via GBD/FH3 domain) with activated Rho-GTPases.

Formins play an important role in the nucleation of actin and the formation of linear actin filaments. The chain is Formin-E (forE) from Dictyostelium discoideum (Social amoeba).